The following is a 209-amino-acid chain: Cyclin-dependent kinase inhibitor 2 (209 aa).

The required for nuclear localization stretch occupies residues 1–32; that stretch reads MAAVRRRERDVVEENGVTTTTVKRRKMEEEVD.

Belongs to the CDI family. ICK/KRP subfamily. In terms of assembly, specifically interacts with CDKA-1, but not with CDKB1-1. Phosphorylated.

The protein localises to the nucleus. Its subcellular location is the nucleoplasm. Functionally, binds and inhibits CYCD2-1/CDKA-1 complex kinase activity. Regulates cell division which is crucial for plant growth, development and morphogenesis. May regulate early lateral root initiation by blocking the G1/S phase transition. Controls the mitosis-to-endocycle transition and the onset of the endoreduplication cycle during leaf development through inhibition of mitotic CDKA-1 kinase complexes. Specifically targets CDKA-1. The protein is Cyclin-dependent kinase inhibitor 2 (KRP2) of Arabidopsis thaliana (Mouse-ear cress).